Here is a 158-residue protein sequence, read N- to C-terminus: 3-dehydroquinate dehydratase (158 aa).

Tyrosine 22 functions as the Proton acceptor in the catalytic mechanism. 3 residues coordinate substrate: asparagine 74, histidine 80, and aspartate 87. The active-site Proton donor is the histidine 100. Substrate is bound by residues 101 to 102 (IS) and arginine 111.

This sequence belongs to the type-II 3-dehydroquinase family. Homododecamer.

It catalyses the reaction 3-dehydroquinate = 3-dehydroshikimate + H2O. The protein operates within metabolic intermediate biosynthesis; chorismate biosynthesis; chorismate from D-erythrose 4-phosphate and phosphoenolpyruvate: step 3/7. Functionally, catalyzes a trans-dehydration via an enolate intermediate. The protein is 3-dehydroquinate dehydratase of Helicobacter hepaticus (strain ATCC 51449 / 3B1).